The chain runs to 92 residues: METLPGLLQRPDPGALSAAQLEQLRKFKIQTRIANEKYLRTHKEVEWLISGFFREIFLKRPDNILEFAADYFTDPRLPNKIHMQLIKDKKAA.

The RIIa domain occupies 43–77; it reads KEVEWLISGFFREIFLKRPDNILEFAADYFTDPRL.

The protein is RIIa domain-containing protein 1 (RIIAD1) of Homo sapiens (Human).